Here is an 89-residue protein sequence, read N- to C-terminus: UPF0213 protein HQ_3675A (89 aa).

The GIY-YIG domain maps to 3–78 (DYHYVYIVEC…KSYTREKKQQ (76 aa)).

The protein belongs to the UPF0213 family.

This is UPF0213 protein HQ_3675A from Haloquadratum walsbyi (strain DSM 16790 / HBSQ001).